A 157-amino-acid polypeptide reads, in one-letter code: Protein-export protein SecB (157 aa).

The protein belongs to the SecB family. In terms of assembly, homotetramer, a dimer of dimers. One homotetramer interacts with 1 SecA dimer.

It is found in the cytoplasm. Its function is as follows. One of the proteins required for the normal export of preproteins out of the cell cytoplasm. It is a molecular chaperone that binds to a subset of precursor proteins, maintaining them in a translocation-competent state. It also specifically binds to its receptor SecA. This is Protein-export protein SecB from Shewanella oneidensis (strain ATCC 700550 / JCM 31522 / CIP 106686 / LMG 19005 / NCIMB 14063 / MR-1).